Here is a 612-residue protein sequence, read N- to C-terminus: Dihydroxy-acid dehydratase (612 aa).

Asp-81 contacts Mg(2+). Cys-122 provides a ligand contact to [2Fe-2S] cluster. The Mg(2+) site is built by Asp-123 and Lys-124. Lys-124 carries the post-translational modification N6-carboxylysine. Cys-195 provides a ligand contact to [2Fe-2S] cluster. Mg(2+) is bound at residue Glu-491. The Proton acceptor role is filled by Ser-517.

Belongs to the IlvD/Edd family. In terms of assembly, homodimer. Requires [2Fe-2S] cluster as cofactor. Mg(2+) is required as a cofactor.

It carries out the reaction (2R)-2,3-dihydroxy-3-methylbutanoate = 3-methyl-2-oxobutanoate + H2O. The catalysed reaction is (2R,3R)-2,3-dihydroxy-3-methylpentanoate = (S)-3-methyl-2-oxopentanoate + H2O. It functions in the pathway amino-acid biosynthesis; L-isoleucine biosynthesis; L-isoleucine from 2-oxobutanoate: step 3/4. The protein operates within amino-acid biosynthesis; L-valine biosynthesis; L-valine from pyruvate: step 3/4. Functions in the biosynthesis of branched-chain amino acids. Catalyzes the dehydration of (2R,3R)-2,3-dihydroxy-3-methylpentanoate (2,3-dihydroxy-3-methylvalerate) into 2-oxo-3-methylpentanoate (2-oxo-3-methylvalerate) and of (2R)-2,3-dihydroxy-3-methylbutanoate (2,3-dihydroxyisovalerate) into 2-oxo-3-methylbutanoate (2-oxoisovalerate), the penultimate precursor to L-isoleucine and L-valine, respectively. In Rhizobium meliloti (strain 1021) (Ensifer meliloti), this protein is Dihydroxy-acid dehydratase.